A 385-amino-acid polypeptide reads, in one-letter code: Putative ribosomal RNA large subunit methyltransferase MJ1653 (385 aa).

The PUA domain maps to 2 to 81; it reads TTKLYVDFGG…LDENYIREKI (80 aa).

Belongs to the methyltransferase superfamily. RlmI family.

Its subcellular location is the cytoplasm. In Methanocaldococcus jannaschii (strain ATCC 43067 / DSM 2661 / JAL-1 / JCM 10045 / NBRC 100440) (Methanococcus jannaschii), this protein is Putative ribosomal RNA large subunit methyltransferase MJ1653.